Consider the following 414-residue polypeptide: MSGIIATYLIHDDSHNLEKKAEQIALGLTIGSWTHLPHLLQEQLKQHKGNVIHVEELAEHEHTNSYLRKKVKRGIIKIEYPLLNFSPDLPAILTTTFGKLSLDGEVKLIDLTFSDELKKHFPGPKFGIDGIRNLLQVHDRPLLMSIFKGMIGRNIGYLKTQLRDQAIGGVDIVKDDEILFENALTPLTKRIVSGKEVLQSVYETYGHKTLYAVNLTGRTFDLKENAKRAVQAGADILLFNVFAYGLDVLQSLAEDDEIPVPIMAHPAVSGAYSASKLYGVSSPLLLGKLLRYAGADFSLFPSPYGSVALEKEEALAISKYLTEDDAFFKKSFSVPSAGIHPGFVPFIVRDFGKDVVINAGGGIHGHPNGAQGGGKAFRTAIDATLQNKPLHEVDDINLHSALQIWGNPSYEVKL.

The active-site Proton acceptor is the Lys99. Residues Lys148, 174–177 (KDDE), His265, Gly338, and 360–361 (GG) each bind substrate. 3 residues coordinate Mg(2+): Lys174, Asp176, and Glu177. Lys174 carries the post-translational modification N6-carboxylysine.

The protein belongs to the RuBisCO large chain family. Type IV subfamily. As to quaternary structure, homodimer. Mg(2+) serves as cofactor.

The catalysed reaction is 5-methylsulfanyl-2,3-dioxopentyl phosphate = 2-hydroxy-5-methylsulfanyl-3-oxopent-1-enyl phosphate. Its pathway is amino-acid biosynthesis; L-methionine biosynthesis via salvage pathway; L-methionine from S-methyl-5-thio-alpha-D-ribose 1-phosphate: step 3/6. Catalyzes the enolization of 2,3-diketo-5-methylthiopentyl-1-phosphate (DK-MTP-1-P) into 2-hydroxy-3-keto-5-methylthiopentenyl-1-phosphate (HK-MTPenyl-1-P). The protein is 2,3-diketo-5-methylthiopentyl-1-phosphate enolase of Bacillus cereus (strain B4264).